Reading from the N-terminus, the 208-residue chain is KPDVLPFIDNLLRFVQAGSEVSALLGRMPSAVGYQPTLGTEMGSSQERITSTKDGSITSIQAVYVPADDPTDPAPATTSAHLDATTVLSRGLAAKGIYPAVDPLDSTSTMSQPWIVGEEHYETAQGVKQTLQRYKELQDIIAILGLDELSEEDRLTVARARKIERFLSQPSFVAEVFTGSPGKYVSLPETIKGFQMILPGXLDNLPEQ.

Belongs to the ATPase alpha/beta chains family. As to quaternary structure, F-type ATPases have 2 components, CF(1) - the catalytic core - and CF(0) - the membrane proton channel. CF(1) has five subunits: alpha(3), beta(3), gamma(1), delta(1), epsilon(1). CF(0) has four main subunits: a(1), b(1), b'(1) and c(9-12).

Its subcellular location is the plastid. It localises to the chloroplast thylakoid membrane. It catalyses the reaction ATP + H2O + 4 H(+)(in) = ADP + phosphate + 5 H(+)(out). In terms of biological role, produces ATP from ADP in the presence of a proton gradient across the membrane. The catalytic sites are hosted primarily by the beta subunits. The chain is ATP synthase subunit beta, chloroplastic (atpB) from Hypolepis hostilis (Fern).